The following is an 83-amino-acid chain: U-actitoxin-Aeq6a (83 aa).

Positions 1–20 are cleaved as a signal peptide; sequence MIYKAVFVCLVLVLLGDVFC. The propeptide occupies 21–36; the sequence is SPRNSGGGTLNDNPFE. Position 82 is a proline amide (proline 82).

Contains 3 disulfide bonds. Expressed by acrorhagi.

The protein localises to the secreted. The protein resides in the nematocyst. Functionally, toxin. The sequence is that of U-actitoxin-Aeq6a from Actinia equina (Beadlet anemone).